Reading from the N-terminus, the 377-residue chain is Chaperone protein DnaJ (377 aa).

In terms of domain architecture, J spans 6–70 (DYYKILGIDK…EKKAIYDKYG (65 aa)). Residues 143–225 (GRVISQKLDK…CKGAKKIKES (83 aa)) form a CR-type zinc finger. The Zn(2+) site is built by cysteine 156, cysteine 159, cysteine 173, cysteine 176, cysteine 199, cysteine 202, cysteine 213, and cysteine 216. CXXCXGXG motif repeat units lie at residues 156 to 163 (CESCNGTG), 173 to 180 (CSTCNGRG), 199 to 206 (CSTCNGLG), and 213 to 220 (CPSCKGAK).

It belongs to the DnaJ family. In terms of assembly, homodimer. It depends on Zn(2+) as a cofactor.

The protein localises to the cytoplasm. Participates actively in the response to hyperosmotic and heat shock by preventing the aggregation of stress-denatured proteins and by disaggregating proteins, also in an autonomous, DnaK-independent fashion. Unfolded proteins bind initially to DnaJ; upon interaction with the DnaJ-bound protein, DnaK hydrolyzes its bound ATP, resulting in the formation of a stable complex. GrpE releases ADP from DnaK; ATP binding to DnaK triggers the release of the substrate protein, thus completing the reaction cycle. Several rounds of ATP-dependent interactions between DnaJ, DnaK and GrpE are required for fully efficient folding. Also involved, together with DnaK and GrpE, in the DNA replication of plasmids through activation of initiation proteins. This chain is Chaperone protein DnaJ, found in Mycoplasmopsis pulmonis (strain UAB CTIP) (Mycoplasma pulmonis).